Here is a 435-residue protein sequence, read N- to C-terminus: Rho GTPase-activating protein 4 (435 aa).

Residues 1 to 59 (MAKVLKSSQSCHFPSPSSSSSTSCGGGNDGSNRDPHSPFNISRREEEEEEEERSEKERE) are disordered. The span at 7–23 (SSQSCHFPSPSSSSSTS) shows a compositional bias: low complexity. A CRIB domain is found at 93 to 106 (IGVPTDVRHVAHVT). The Rho-GAP domain occupies 138 to 319 (VSTESMQLSY…LIVKTLKDRK (182 aa)). The disordered stretch occupies residues 321–343 (SRDKLVPASNPSPRDHNGDQSSS).

Functionally, acts as a GTPase activator for the Rac-type GTPase by converting it to an inactive GDP-bound state. Acts as a negative feedback regulator in tolerance to oxygen deprivation which requires ARAC4/ROP2. The sequence is that of Rho GTPase-activating protein 4 (ROPGAP4) from Arabidopsis thaliana (Mouse-ear cress).